We begin with the raw amino-acid sequence, 347 residues long: NADH-ubiquinone oxidoreductase chain 2 (347 aa).

The next 10 membrane-spanning stretches (helical) occupy residues 3 to 23 (PPIL…VLTS), 25 to 45 (HWLT…PILM), 60 to 80 (LLTQ…NLMF), 96 to 116 (AMVT…FWVP), 149 to 169 (IDPN…GWGG), 178 to 198 (ILAY…LYNP), 200 to 220 (MMLL…MLFM), 237 to 257 (APLI…LPPL), 274 to 294 (EMII…YFYM), and 323 to 343 (MILL…TPLL).

Belongs to the complex I subunit 2 family. Core subunit of respiratory chain NADH dehydrogenase (Complex I) which is composed of 45 different subunits. Interacts with TMEM242.

The protein resides in the mitochondrion inner membrane. It catalyses the reaction a ubiquinone + NADH + 5 H(+)(in) = a ubiquinol + NAD(+) + 4 H(+)(out). Its function is as follows. Core subunit of the mitochondrial membrane respiratory chain NADH dehydrogenase (Complex I) which catalyzes electron transfer from NADH through the respiratory chain, using ubiquinone as an electron acceptor. Essential for the catalytic activity and assembly of complex I. This chain is NADH-ubiquinone oxidoreductase chain 2, found in Mungos mungo (Banded mongoose).